The following is a 211-amino-acid chain: Ferritin heavy chain (211 aa).

A signal peptide spans 1–20; it reads MNSILLVFAGILAVCLPASA. The region spanning 35 to 191 is the Ferritin-like diiron domain; it reads ITMHRSCRNS…GKASTLKKLM (157 aa). Cys41 and Cys150 are oxidised to a cystine. Glu52, Glu87, His90, Glu136, and Gln173 together coordinate Fe cation.

The protein belongs to the ferritin family. Oligomer of 12 light (L) chains and 12 heavy (H) chains; L and H chains are disulfide-linked. The functional molecule forms a roughly spherical shell with a diameter of 12 nm and contains a central cavity into which the insoluble ferric iron core is deposited.

Its subcellular location is the golgi apparatus. It localises to the secreted. It catalyses the reaction 4 Fe(2+) + O2 + 4 H(+) = 4 Fe(3+) + 2 H2O. Its function is as follows. Stores iron in a soluble, non-toxic, readily available form. Important for iron homeostasis. Iron is taken up in the ferrous form and deposited as ferric hydroxides after oxidation. Ferritin is composed of a heavy (H) chain which is responsible for the oxidation and uptake of ferrous iron, and a light (L) chain which facilitates the nucleation of the ferrihydrite iron core. In Trichoplusia ni (Cabbage looper), this protein is Ferritin heavy chain.